The primary structure comprises 357 residues: Homoserine kinase (357 aa).

Belongs to the GHMP kinase family. Homoserine kinase subfamily.

The enzyme catalyses L-homoserine + ATP = O-phospho-L-homoserine + ADP + H(+). It participates in amino-acid biosynthesis; L-threonine biosynthesis; L-threonine from L-aspartate: step 4/5. Functionally, commits homoserine to the threonine biosynthesis pathway by catalyzing its O-phosphorylation. The chain is Homoserine kinase from Cryptococcus neoformans var. grubii serotype A (strain H99 / ATCC 208821 / CBS 10515 / FGSC 9487) (Filobasidiella neoformans var. grubii).